The primary structure comprises 387 residues: 3-ketoacyl-CoA thiolase (387 aa).

The Acyl-thioester intermediate role is filled by cysteine 91. Residues histidine 343 and cysteine 373 each act as proton acceptor in the active site.

It belongs to the thiolase-like superfamily. Thiolase family. Heterotetramer of two alpha chains (FadB) and two beta chains (FadA).

Its subcellular location is the cytoplasm. It catalyses the reaction an acyl-CoA + acetyl-CoA = a 3-oxoacyl-CoA + CoA. The protein operates within lipid metabolism; fatty acid beta-oxidation. In terms of biological role, catalyzes the final step of fatty acid oxidation in which acetyl-CoA is released and the CoA ester of a fatty acid two carbons shorter is formed. The polypeptide is 3-ketoacyl-CoA thiolase (Shewanella loihica (strain ATCC BAA-1088 / PV-4)).